The sequence spans 117 residues: Large ribosomal subunit protein eL18 (117 aa).

It belongs to the eukaryotic ribosomal protein eL18 family.

The protein is Large ribosomal subunit protein eL18 of Archaeoglobus fulgidus (strain ATCC 49558 / DSM 4304 / JCM 9628 / NBRC 100126 / VC-16).